The sequence spans 334 residues: Protein-methionine-sulfoxide reductase catalytic subunit MsrP (334 aa).

Residues 1-44 (MKKVSRLTEADVTAESAFFMQRRQVLKALGITTAALSLPTAAHA) constitute a signal peptide (tat-type signal). Mo-molybdopterin-binding positions include Asn88, 91 to 92 (YE), Cys146, Thr181, Asn233, Arg238, and 249 to 251 (GIK).

Belongs to the MsrP family. As to quaternary structure, heterodimer of a catalytic subunit (MsrP) and a heme-binding subunit (MsrQ). Mo-molybdopterin is required as a cofactor. Post-translationally, predicted to be exported by the Tat system. The position of the signal peptide cleavage has not been experimentally proven.

It localises to the periplasm. The enzyme catalyses L-methionyl-[protein] + a quinone + H2O = L-methionyl-(S)-S-oxide-[protein] + a quinol. It catalyses the reaction L-methionyl-[protein] + a quinone + H2O = L-methionyl-(R)-S-oxide-[protein] + a quinol. Its function is as follows. Part of the MsrPQ system that repairs oxidized periplasmic proteins containing methionine sulfoxide residues (Met-O), using respiratory chain electrons. Thus protects these proteins from oxidative-stress damage caused by reactive species of oxygen and chlorine generated by the host defense mechanisms. MsrPQ is essential for the maintenance of envelope integrity under bleach stress, rescuing a wide series of structurally unrelated periplasmic proteins from methionine oxidation. The catalytic subunit MsrP is non-stereospecific, being able to reduce both (R-) and (S-) diastereoisomers of methionine sulfoxide. This chain is Protein-methionine-sulfoxide reductase catalytic subunit MsrP, found in Cronobacter sakazakii (strain ATCC BAA-894) (Enterobacter sakazakii).